A 129-amino-acid polypeptide reads, in one-letter code: Glycine cleavage system H protein (129 aa).

Residues 24-106 (LVRVGISAFA…HGEGWLLVLR (83 aa)) form the Lipoyl-binding domain. N6-lipoyllysine is present on Lys65.

It belongs to the GcvH family. In terms of assembly, the glycine cleavage system is composed of four proteins: P, T, L and H. It depends on (R)-lipoate as a cofactor.

The glycine cleavage system catalyzes the degradation of glycine. The H protein shuttles the methylamine group of glycine from the P protein to the T protein. The sequence is that of Glycine cleavage system H protein from Parasynechococcus marenigrum (strain WH8102).